The chain runs to 548 residues: Chaperonin GroEL (548 aa).

ATP is bound by residues 30–33 (TLGP), K51, 87–91 (DGTTT), G415, 479–481 (NAA), and D495.

The protein belongs to the chaperonin (HSP60) family. In terms of assembly, forms a cylinder of 14 subunits composed of two heptameric rings stacked back-to-back. Interacts with the co-chaperonin GroES.

It localises to the cytoplasm. It catalyses the reaction ATP + H2O + a folded polypeptide = ADP + phosphate + an unfolded polypeptide.. In terms of biological role, together with its co-chaperonin GroES, plays an essential role in assisting protein folding. The GroEL-GroES system forms a nano-cage that allows encapsulation of the non-native substrate proteins and provides a physical environment optimized to promote and accelerate protein folding. In Serratia proteamaculans (strain 568), this protein is Chaperonin GroEL.